Reading from the N-terminus, the 440-residue chain is 3-phosphoshikimate 1-carboxyvinyltransferase (440 aa).

Positions 19, 20, and 24 each coordinate 3-phosphoshikimate. Lys19 contacts phosphoenolpyruvate. Gly92 and Arg121 together coordinate phosphoenolpyruvate. The 3-phosphoshikimate site is built by Ser166, Gln168, Asp315, and Lys342. Gln168 lines the phosphoenolpyruvate pocket. Asp315 functions as the Proton acceptor in the catalytic mechanism. Residues Arg346 and Arg399 each contribute to the phosphoenolpyruvate site.

Belongs to the EPSP synthase family. As to quaternary structure, monomer.

The protein localises to the cytoplasm. It carries out the reaction 3-phosphoshikimate + phosphoenolpyruvate = 5-O-(1-carboxyvinyl)-3-phosphoshikimate + phosphate. Its pathway is metabolic intermediate biosynthesis; chorismate biosynthesis; chorismate from D-erythrose 4-phosphate and phosphoenolpyruvate: step 6/7. In terms of biological role, catalyzes the transfer of the enolpyruvyl moiety of phosphoenolpyruvate (PEP) to the 5-hydroxyl of shikimate-3-phosphate (S3P) to produce enolpyruvyl shikimate-3-phosphate and inorganic phosphate. The protein is 3-phosphoshikimate 1-carboxyvinyltransferase of Leptospira interrogans serogroup Icterohaemorrhagiae serovar copenhageni (strain Fiocruz L1-130).